The sequence spans 244 residues: Kallikrein-6 (244 aa).

The signal sequence occupies residues 1–16 (MKKLMVVLSLIAAAWA). The propeptide at 17–21 (EEQNK) is activation peptide. A Peptidase S1 domain is found at 22-242 (LVHGGPCDKT…YTNWIQKTIQ (221 aa)). 6 cysteine pairs are disulfide-bonded: cysteine 28–cysteine 157, cysteine 47–cysteine 63, cysteine 131–cysteine 231, cysteine 138–cysteine 203, cysteine 168–cysteine 182, and cysteine 193–cysteine 218. Catalysis depends on charge relay system residues histidine 62 and aspartate 106. Asparagine 134 carries N-linked (GlcNAc...) asparagine glycosylation. Serine 197 functions as the Charge relay system in the catalytic mechanism.

Inactivated by autolytic cleavage after Arg-80. In fluids, highest levels found in milk of lactating women followed by cerebrospinal fluid, nipple aspirate fluid and breast cyst fluid. Also found in serum, seminal plasma and some amniotic fluids and breast tumor cytosolic extracts. Not detected in urine. At the tissue level, highest concentrations found in glandular tissues such as salivary glands followed by lung, colon, fallopian tube, placenta, breast, pituitary and kidney. Not detected in skin, spleen, bone, thyroid, heart, ureter, liver, muscle, endometrium, testis, pancreas, seminal vesicle, ovary, adrenals and prostate. In brain, detected in gray matter neurons (at protein level). Colocalizes with pathological inclusions such as Lewy bodies and glial cytoplasmic inclusions. Overexpressed in primary breast tumors but not expressed in metastatic tumors.

Its subcellular location is the secreted. It localises to the nucleus. The protein localises to the nucleolus. The protein resides in the cytoplasm. It is found in the mitochondrion. Its subcellular location is the microsome. With respect to regulation, inhibited by a range of serine protease inhibitors including soybean trypsin inhibitor, benzamidine and serpins. Activated by a range of glycosaminoglycans including chondroitin sulfate, dermatan sulfate, heparan sulfate and heparin. Serine protease which exhibits a preference for Arg over Lys in the substrate P1 position and for Ser or Pro in the P2 position. Shows activity against amyloid precursor protein, myelin basic protein, gelatin, casein and extracellular matrix proteins such as fibronectin, laminin, vitronectin and collagen. Degrades alpha-synuclein and prevents its polymerization, indicating that it may be involved in the pathogenesis of Parkinson disease and other synucleinopathies. May be involved in regulation of axon outgrowth following spinal cord injury. Tumor cells treated with a neutralizing KLK6 antibody migrate less than control cells, suggesting a role in invasion and metastasis. The protein is Kallikrein-6 (KLK6) of Homo sapiens (Human).